Reading from the N-terminus, the 297-residue chain is GTPase Era (297 aa).

In terms of domain architecture, Era-type G spans 7-174 (HSGFVSIIGR…VQVVRDLLPE (168 aa)). The interval 15–22 (GRPNVGKS) is G1. Residue 15–22 (GRPNVGKS) coordinates GTP. The segment at 41-45 (QTTRN) is G2. Positions 62–65 (DTPG) are G3. GTP-binding positions include 62–66 (DTPGI) and 124–127 (NKVD). A G4 region spans residues 124 to 127 (NKVD). The G5 stretch occupies residues 153 to 155 (VSA). The region spanning 205 to 282 (THDEVPYSVA…FLELFVRVSR (78 aa)) is the KH type-2 domain.

It belongs to the TRAFAC class TrmE-Era-EngA-EngB-Septin-like GTPase superfamily. Era GTPase family. Monomer.

The protein resides in the cytoplasm. It is found in the cell inner membrane. In terms of biological role, an essential GTPase that binds both GDP and GTP, with rapid nucleotide exchange. Plays a role in 16S rRNA processing and 30S ribosomal subunit biogenesis and possibly also in cell cycle regulation and energy metabolism. This is GTPase Era from Geotalea daltonii (strain DSM 22248 / JCM 15807 / FRC-32) (Geobacter daltonii).